A 328-amino-acid chain; its full sequence is MFRIAVDCMGFENSVSEAVKAVIKYAKKHKDLSFVLVGDENQIRPLVENKKYLNYRIVHTTNEIGMSDSVLTAYRKKDSSMYLTIELLKNNEVDTIISAGSSSAYVALTYNLIGKIHHKIKVGFMSYVPTVTKRGFWFLDVGANKEYLGEELYYLGKMANTFITSVFNYQPRLGVLNIGAEKNKGFEYHQVVYNLLENDKTVDFLGFIEPRGLIKGECDLLVSDGYSGNLVLKSLEGALKSVGKILKKNYKINPLGALFSANVIYQITKTFDYKNNAGAVVLGLNKLVLKTHGSADAKQFYSTIRLAHESLLNNLIEKITKECSTFLN.

This sequence belongs to the PlsX family. In terms of assembly, homodimer. Probably interacts with PlsY.

It is found in the cytoplasm. It catalyses the reaction a fatty acyl-[ACP] + phosphate = an acyl phosphate + holo-[ACP]. The protein operates within lipid metabolism; phospholipid metabolism. In terms of biological role, catalyzes the reversible formation of acyl-phosphate (acyl-PO(4)) from acyl-[acyl-carrier-protein] (acyl-ACP). This enzyme utilizes acyl-ACP as fatty acyl donor, but not acyl-CoA. The polypeptide is Phosphate acyltransferase (Mycoplasmoides gallisepticum (strain R(low / passage 15 / clone 2)) (Mycoplasma gallisepticum)).